A 299-amino-acid polypeptide reads, in one-letter code: Sulfotransferase 1B1 (299 aa).

48–53 (KSGTTW) lines the 3'-phosphoadenylyl sulfate pocket. 107–109 (KTH) provides a ligand contact to substrate. H109 (proton acceptor) is an active-site residue. 3'-phosphoadenylyl sulfate contacts are provided by residues R131, S139, Y194, 228 to 233 (TSFEMM), and 258 to 260 (RKG).

It belongs to the sulfotransferase 1 family. As to expression, liver specific.

It is found in the cytoplasm. The enzyme catalyses a phenol + 3'-phosphoadenylyl sulfate = an aryl sulfate + adenosine 3',5'-bisphosphate + H(+). The catalysed reaction is 3,3',5-triiodo-L-thyronine + 3'-phosphoadenylyl sulfate = 3,3',5-triiodo-L-thyronine sulfate + adenosine 3',5'-bisphosphate + H(+). It carries out the reaction 3,3',5'-triiodo-L-thyronine + 3'-phosphoadenylyl sulfate = 3,3',5'-triiodo-L-thyronine sulfate + adenosine 3',5'-bisphosphate + H(+). It catalyses the reaction 3,3'-diiodo-L-thyronine + 3'-phosphoadenylyl sulfate = 3,3'-diiodo-L-thyronine sulfate + adenosine 3',5'-bisphosphate + H(+). The enzyme catalyses dopamine + 3'-phosphoadenylyl sulfate = dopamine 3-O-sulfate + adenosine 3',5'-bisphosphate + H(+). The catalysed reaction is dopamine + 3'-phosphoadenylyl sulfate = dopamine 4-O-sulfate + adenosine 3',5'-bisphosphate + H(+). It carries out the reaction 4-ethylphenol + 3'-phosphoadenylyl sulfate = 4-ethylphenyl sulfate + adenosine 3',5'-bisphosphate + H(+). Sulfotransferase that utilizes 3'-phospho-5'-adenylyl sulfate (PAPS) as sulfonate donor to catalyze the sulfate conjugation of dopamine, small phenols such as 1-naphthol and p-nitrophenol and thyroid hormones, including 3,3'-diiodothyronine, triidothyronine (T3) and reverse triiodothyronine (rT3). May play a role in gut microbiota-host metabolic interaction. O-sulfonates 4-ethylphenol (4-EP), a dietary tyrosine-derived metabolite produced by gut bacteria. The product 4-EPS crosses the blood-brain barrier and may negatively regulate oligodendrocyte maturation and myelination, affecting the functional connectivity of different brain regions associated with the limbic system. The protein is Sulfotransferase 1B1 of Mus musculus (Mouse).